The chain runs to 484 residues: Fork head protein homolog 1 (484 aa).

An FHA domain is found at 76–142 (VTIGRNTDSL…NGAKVNFRRI (67 aa)). A DNA-binding region (fork-head) is located at residues 302–393 (IKPPQSYASM…RRDFLNKWNA (92 aa)).

As to quaternary structure, interacts (via FHA domain) with ECM30, GLN3, URE2, MPH1 AND FDO1. Interacts with the origin recognition complex (ORC) composed of ORC1 to ORC6.

It localises to the nucleus. It is found in the cytoplasm. The protein resides in the cytosol. Functionally, transcription factor that regulates the expression of the CLB2 cluster of genes during the G2/M phase of the mitotic cell cycle. The CLB2 cluster of genes includes mitotic regulators such as CLB1, CLB2, CDC5 and CDC20 as well as SWI5 and ACE2, transcription factors required for the subsequent temporal wave of cell cycle regulated gene expression in the M/G1 phase interval. Involved in HMRa silencing. FKH1 and FKH2 associate with the coding regions of active genes and influence, in opposing ways, transcriptional elongation and termination, and coordinate early transcription elongation and pre-mRNA processing. Both FKH1 and FKH2 play a role as regulators of lifespan in collaboration with the anaphase-promoting complex (APC), likely through combined regulation of stress response, genomic stability, and cell cycle regulation. FKH1 and FKH2 function also in controlling yeast cell morphology by preventing preudohyphal growth. Acts as a rate-limiting replication origin activator via its interaction with the origin recognition complex (ORC). Plays a transcription-independent role in recombination donor preference during mating-type switching through binding to the recombination enhancer (RE), a 700-bp cis-acting element that controls recombination along the left arm of chromosome III. The sequence is that of Fork head protein homolog 1 from Saccharomyces cerevisiae (strain ATCC 204508 / S288c) (Baker's yeast).